The chain runs to 223 residues: Ribonuclease T (223 aa).

The Exonuclease domain maps to 20 to 194 (VVIDVETAGF…YDTNQTALLF (175 aa)). 4 residues coordinate Mg(2+): aspartate 23, glutamate 25, histidine 181, and aspartate 186. Catalysis depends on histidine 181, which acts as the Proton donor/acceptor.

It belongs to the RNase T family. As to quaternary structure, homodimer. Requires Mg(2+) as cofactor.

Functionally, trims short 3' overhangs of a variety of RNA species, leaving a one or two nucleotide 3' overhang. Responsible for the end-turnover of tRNA: specifically removes the terminal AMP residue from uncharged tRNA (tRNA-C-C-A). Also appears to be involved in tRNA biosynthesis. This Pectobacterium atrosepticum (strain SCRI 1043 / ATCC BAA-672) (Erwinia carotovora subsp. atroseptica) protein is Ribonuclease T.